A 689-amino-acid polypeptide reads, in one-letter code: Elongation factor G (689 aa).

One can recognise a tr-type G domain in the interval 8 to 283 (SKCRNIGIMA…AVVDFLPAPN (276 aa)). GTP contacts are provided by residues 17-24 (AHIDAGKT), 81-85 (DTPGH), and 135-138 (NKMD).

This sequence belongs to the TRAFAC class translation factor GTPase superfamily. Classic translation factor GTPase family. EF-G/EF-2 subfamily.

It localises to the cytoplasm. Its function is as follows. Catalyzes the GTP-dependent ribosomal translocation step during translation elongation. During this step, the ribosome changes from the pre-translocational (PRE) to the post-translocational (POST) state as the newly formed A-site-bound peptidyl-tRNA and P-site-bound deacylated tRNA move to the P and E sites, respectively. Catalyzes the coordinated movement of the two tRNA molecules, the mRNA and conformational changes in the ribosome. The protein is Elongation factor G of Ehrlichia ruminantium (strain Welgevonden).